Here is a 37-residue protein sequence, read N- to C-terminus: Chorion class CB protein PCH12 (37 aa).

Residues 1–26 are central domain; the sequence is DGIFPTVGAGDVWYGCGDGAVGIVAE. Residues 27–37 form a right arm region; it reads TPFASTTTNPA.

This sequence belongs to the chorion protein family.

In terms of biological role, this protein is one of many from the eggshell of the silk moth. The polypeptide is Chorion class CB protein PCH12 (Antheraea polyphemus (Polyphemus moth)).